A 143-amino-acid polypeptide reads, in one-letter code: MTTARDIMNAGVTCVGEHETLTAAAQYMREHDIGALPICGDDDRLHGMLTDRDIVIKGLAAGLDPNTATAGELARDSIYYVDANASIQEMLNVMEEHQVRRVPVISEHRLVGIVTEADIARHLPEHAIVQFVKAICSPMALAS.

CBS domains are found at residues M8–P65 and L73–F131. C14 and C39 form a disulfide bridge. Zn(2+) is bound by residues H97 and H122.

Homodimer.

Its subcellular location is the secreted. In terms of biological role, unlike some other CBS-domain containing proteins does not seem to bind AMP. This is Hypoxic response protein 1 (hrp1) from Mycobacterium tuberculosis (strain CDC 1551 / Oshkosh).